The chain runs to 122 residues: Large ribosomal subunit protein uL14 (122 aa).

It belongs to the universal ribosomal protein uL14 family. As to quaternary structure, part of the 50S ribosomal subunit. Forms a cluster with proteins L3 and L19. In the 70S ribosome, L14 and L19 interact and together make contacts with the 16S rRNA in bridges B5 and B8.

Its function is as follows. Binds to 23S rRNA. Forms part of two intersubunit bridges in the 70S ribosome. The chain is Large ribosomal subunit protein uL14 from Methylibium petroleiphilum (strain ATCC BAA-1232 / LMG 22953 / PM1).